A 245-amino-acid polypeptide reads, in one-letter code: Type I iodothyronine deiodinase (245 aa).

The Extracellular portion of the chain corresponds to Leu1–Lys9. Residues Leu10 to Phe30 form a helical; Signal-anchor for type III membrane protein membrane-spanning segment. Residues Pro31–Lys245 are Cytoplasmic-facing. Residue Sec123 is part of the active site. A non-standard amino acid (selenocysteine) is located at residue Sec123.

It belongs to the iodothyronine deiodinase family. Predominantly monomer. Can form homodimers but homodimerization is not essential for enzyme activity.

The protein localises to the cell membrane. It is found in the endoplasmic reticulum membrane. It localises to the basolateral cell membrane. The catalysed reaction is 3,3',5-triiodo-L-thyronine + iodide + A + H(+) = L-thyroxine + AH2. It carries out the reaction 3,3',5'-triiodo-L-thyronine + iodide + A + H(+) = L-thyroxine + AH2. It catalyses the reaction 3,3'-diiodo-L-thyronine + iodide + A + H(+) = 3,3',5'-triiodo-L-thyronine + AH2. The enzyme catalyses 3,3'-diiodo-L-thyronine + iodide + A + H(+) = 3,3',5-triiodo-L-thyronine + AH2. The catalysed reaction is 3'-iodo-L-thyronine + iodide + A + H(+) = 3',5'-diiodo-L-thyronine + AH2. It carries out the reaction 3-iodo-L-thyronine + iodide + A + H(+) = 3,5-diiodo-L-thyronine + AH2. It catalyses the reaction 3-iodo-L-thyronine + iodide + A + H(+) = 3,3'-diiodo-L-thyronine + AH2. The enzyme catalyses 3,3'-diiodothyronamine + iodide + A + H(+) = 3,3',5'-triiodothyronamine + AH2. The catalysed reaction is 3'-iodothyronamine + iodide + A + H(+) = 3',5'-diiodothyronamine + AH2. It carries out the reaction 3-iodothyronamine + iodide + A + H(+) = 3,3'-diiodothyronamine + AH2. It catalyses the reaction 3,3'-diiodothyronamine + iodide + A + H(+) = 3,3',5-triiodothyronamine + AH2. The enzyme catalyses 3-iodothyronamine + iodide + A + H(+) = 3,5-diiodothyronamine + AH2. The catalysed reaction is 3,3'-diiodo-L-thyronine sulfate + iodide + A + H(+) = 3,3',5'-triiodo-L-thyronine sulfate + AH2. It carries out the reaction 3,3',5'-triiodo-L-thyronine sulfate + iodide + A + H(+) = L-thyroxine sulfate + AH2. It catalyses the reaction 3,3'-diiodo-L-thyronine sulfate + iodide + A + H(+) = 3,3',5-triiodo-L-thyronine sulfate + AH2. Plays a crucial role in the metabolism of thyroid hormones (TH) and has specific roles in TH activation and inactivation by deiodination. Catalyzes the deiodiantion of L-thyroxine (T4) to 3,5,3'-triiodothyronine (T3) and 3,3',5'-triiodothyronine (rT3) to 3,3'-diiodothyronine (3,3'-T2) via outer-ring deiodination (ORD). Catalyzes the deiodiantion of T4 to rT3, T3 to 3,3'-T2, 3,5-diiodothyronine (3,5-T2) to 3-monoiodothyronine (3-T1) and 3,3'-T2 to 3-T1 via inner-ring deiodination (IRD). Catalyzes the deiodiantion of 3',5'-diiodothyronine (3',5'-T2) to 3'-monoiodothyronine (3'-T1) via ORD. Catalyzes the phenolic ring deiodinations of 3,3',5'-triiodothyronamine, 3',5'-diiodothyronamine and 3,3'-diiodothyronamine as well as tyrosyl ring deiodinations of 3,5,3'-triiodothyronamine and 3,5-diiodothyronamine. Catalyzes the deiodination of L-thyroxine sulfate and 3,3',5-triiodo-L-thyronine sulfate via IRD and of 3,3',5'-triiodo-L-thyronine sulfate via ORD. In Gallus gallus (Chicken), this protein is Type I iodothyronine deiodinase (DIO1).